The chain runs to 379 residues: UDP-4-amino-4-deoxy-L-arabinose--oxoglutarate aminotransferase (379 aa).

K182 carries the N6-(pyridoxal phosphate)lysine modification.

Belongs to the DegT/DnrJ/EryC1 family. ArnB subfamily. Homodimer. It depends on pyridoxal 5'-phosphate as a cofactor.

The enzyme catalyses UDP-4-amino-4-deoxy-beta-L-arabinose + 2-oxoglutarate = UDP-beta-L-threo-pentopyranos-4-ulose + L-glutamate. Its pathway is nucleotide-sugar biosynthesis; UDP-4-deoxy-4-formamido-beta-L-arabinose biosynthesis; UDP-4-deoxy-4-formamido-beta-L-arabinose from UDP-alpha-D-glucuronate: step 2/3. It functions in the pathway bacterial outer membrane biogenesis; lipopolysaccharide biosynthesis. Its function is as follows. Catalyzes the conversion of UDP-4-keto-arabinose (UDP-Ara4O) to UDP-4-amino-4-deoxy-L-arabinose (UDP-L-Ara4N). The modified arabinose is attached to lipid A and is required for resistance to polymyxin and cationic antimicrobial peptides. This is UDP-4-amino-4-deoxy-L-arabinose--oxoglutarate aminotransferase from Shigella flexneri.